The primary structure comprises 509 residues: Probable Xaa-Pro aminopeptidase MAC_04092 (509 aa).

Residues Asp273, Asp284, Glu437, and Glu478 each contribute to the Mn(2+) site.

It belongs to the peptidase M24B family. Mn(2+) serves as cofactor.

It catalyses the reaction Release of any N-terminal amino acid, including proline, that is linked to proline, even from a dipeptide or tripeptide.. Its function is as follows. Catalyzes the removal of a penultimate prolyl residue from the N-termini of peptides. The sequence is that of Probable Xaa-Pro aminopeptidase MAC_04092 from Metarhizium acridum (strain CQMa 102).